We begin with the raw amino-acid sequence, 499 residues long: Putative protein phosphatase 2C 76 (499 aa).

The signal sequence occupies residues 1-34 (MRLGCSGRRRRLLRAALLRLVVLVLVAPPRRCAG). The tract at residues 67 to 101 (AGSGGEGDGDRRSSSSSPPPPPHPRGCHVAVDRGR) is disordered. One can recognise a PPM-type phosphatase domain in the interval 92–457 (GCHVAVDRGR…DNVAAVIVPL (366 aa)). Residues D138 and G139 each coordinate Mn(2+). Positions 286–306 (KKTSVVSGKRRRKRNSNNRDD) are disordered. The Mn(2+) site is built by D397 and D448.

It belongs to the PP2C family. The cofactor is Mg(2+). It depends on Mn(2+) as a cofactor.

The enzyme catalyses O-phospho-L-seryl-[protein] + H2O = L-seryl-[protein] + phosphate. It carries out the reaction O-phospho-L-threonyl-[protein] + H2O = L-threonyl-[protein] + phosphate. This is Putative protein phosphatase 2C 76 from Oryza sativa subsp. japonica (Rice).